The chain runs to 367 residues: UDP-N-acetylglucosamine--N-acetylmuramyl-(pentapeptide) pyrophosphoryl-undecaprenol N-acetylglucosamine transferase (367 aa).

UDP-N-acetyl-alpha-D-glucosamine contacts are provided by residues 15-17, asparagine 127, arginine 163, serine 191, isoleucine 249, and glutamine 294; that span reads TGG.

Belongs to the glycosyltransferase 28 family. MurG subfamily.

The protein resides in the cell inner membrane. The catalysed reaction is di-trans,octa-cis-undecaprenyl diphospho-N-acetyl-alpha-D-muramoyl-L-alanyl-D-glutamyl-meso-2,6-diaminopimeloyl-D-alanyl-D-alanine + UDP-N-acetyl-alpha-D-glucosamine = di-trans,octa-cis-undecaprenyl diphospho-[N-acetyl-alpha-D-glucosaminyl-(1-&gt;4)]-N-acetyl-alpha-D-muramoyl-L-alanyl-D-glutamyl-meso-2,6-diaminopimeloyl-D-alanyl-D-alanine + UDP + H(+). It participates in cell wall biogenesis; peptidoglycan biosynthesis. Its function is as follows. Cell wall formation. Catalyzes the transfer of a GlcNAc subunit on undecaprenyl-pyrophosphoryl-MurNAc-pentapeptide (lipid intermediate I) to form undecaprenyl-pyrophosphoryl-MurNAc-(pentapeptide)GlcNAc (lipid intermediate II). This is UDP-N-acetylglucosamine--N-acetylmuramyl-(pentapeptide) pyrophosphoryl-undecaprenol N-acetylglucosamine transferase from Burkholderia lata (strain ATCC 17760 / DSM 23089 / LMG 22485 / NCIMB 9086 / R18194 / 383).